A 96-amino-acid polypeptide reads, in one-letter code: Large ribosomal subunit protein eL21 (96 aa).

The protein belongs to the eukaryotic ribosomal protein eL21 family.

This chain is Large ribosomal subunit protein eL21, found in Methanothrix thermoacetophila (strain DSM 6194 / JCM 14653 / NBRC 101360 / PT) (Methanosaeta thermophila).